Consider the following 111-residue polypeptide: Large ribosomal subunit protein uL24 (111 aa).

This sequence belongs to the universal ribosomal protein uL24 family. Part of the 50S ribosomal subunit.

One of two assembly initiator proteins, it binds directly to the 5'-end of the 23S rRNA, where it nucleates assembly of the 50S subunit. In terms of biological role, one of the proteins that surrounds the polypeptide exit tunnel on the outside of the subunit. This is Large ribosomal subunit protein uL24 from Myxococcus xanthus (strain DK1622).